We begin with the raw amino-acid sequence, 197 residues long: Putative RING-H2 finger protein ATL71 (197 aa).

The helical transmembrane segment at 20 to 40 (MGGLAYGIGVSIGILMLITTI) threads the bilayer. The segment at 53–80 (SASPTTTPRTRRRQRESNGTLPPGQERF) is disordered. The segment at 129-171 (CSICLADYKKMDMIRVLPDCNHLFHDNCVDPWLRLHPTCPVCR) adopts an RING-type; atypical zinc-finger fold.

Belongs to the RING-type zinc finger family. ATL subfamily.

Its subcellular location is the membrane. The catalysed reaction is S-ubiquitinyl-[E2 ubiquitin-conjugating enzyme]-L-cysteine + [acceptor protein]-L-lysine = [E2 ubiquitin-conjugating enzyme]-L-cysteine + N(6)-ubiquitinyl-[acceptor protein]-L-lysine.. It functions in the pathway protein modification; protein ubiquitination. In Arabidopsis thaliana (Mouse-ear cress), this protein is Putative RING-H2 finger protein ATL71 (ATL71).